Reading from the N-terminus, the 988-residue chain is Exportin-T (988 aa).

This sequence belongs to the exportin family. Expressed in young leaves, growing leaf blades, young floral organs and root tips.

It localises to the nucleus. The protein resides in the cytoplasm. In terms of biological role, probable tRNA nucleus export receptor which regulates tRNA processing and facilitates tRNA translocation across the nuclear pore complex. Is required for proper activity of the shoot apical meristem (SAM) and correct leaf initiation at different developmental stages, and may play a role in floral patterning. The polypeptide is Exportin-T (PSD) (Arabidopsis thaliana (Mouse-ear cress)).